Here is a 961-residue protein sequence, read N- to C-terminus: Leucine-rich repeat-containing protein egg-6 (961 aa).

Residues 1-18 (MRWLTLIAVAHLIAFLSS) form the signal peptide. Residues 19–854 (AEITCPRIPE…EQNERHRNIR (836 aa)) lie on the Extracellular side of the membrane. LRR repeat units lie at residues 60–78 (IDEL…SLPF), 79–101 (NGLR…AWRH), 103–124 (EATI…VFGN), 125–148 (LSTL…AFNG), 150–172 (SALT…SLDA), 174–197 (KASL…ILRN), 199–222 (ANLM…LMNL), 223–245 (PFLR…AFMN), 247–269 (PQLQ…RLQG), 270–294 (FKNL…DLPN), 305–316 (ITKIETLAFSNN), 317–339 (PNLQ…SFES), 340–363 (LDKL…MFDG), 364–387 (MKNL…SFAQ), 388–411 (LAHL…TFDK), 413–435 (SKLF…VFKK), and 437–455 (ISNI…SFNE). Residues 855–875 (IITAIALAFVGAVTVVVIIFF) form a helical membrane-spanning segment. At 876-961 (VNYTKKQRRL…PQAVSHRSRH (86 aa)) the chain is on the cytoplasmic side. The segment at 890–943 (VYRSSPSSSGSSGQNAANESGRSSAAPSPIRPPLMNIPKTPNNRTMESTFGQPQ) is disordered. Residues 893 to 902 (SSPSSSGSSG) are compositionally biased toward low complexity. The span at 928-943 (KTPNNRTMESTFGQPQ) shows a compositional bias: polar residues.

As to expression, in L1 larvae, expressed in a subset of epithelial cells including epidermal, vulval and rectal cells and the excretory duct and pore. Also detected in some neurons. Absent from internal epithelia such as the gut and pharyngeal tubes.

It is found in the apical cell membrane. Its function is as follows. Required for apical extracellular matrix organization and epithelial junction maintenance. The chain is Leucine-rich repeat-containing protein egg-6 from Caenorhabditis elegans.